A 329-amino-acid polypeptide reads, in one-letter code: Malate dehydrogenase (329 aa).

12–18 (GAAGQIG) lines the NAD(+) pocket. Residues Arg-95 and Arg-101 each coordinate substrate. NAD(+) is bound by residues Asn-108, Gln-115, and 132–134 (VGN). Positions 134 and 165 each coordinate substrate. The active-site Proton acceptor is the His-190.

It belongs to the LDH/MDH superfamily. MDH type 2 family. In terms of assembly, homodimer.

It catalyses the reaction (S)-malate + NAD(+) = oxaloacetate + NADH + H(+). With respect to regulation, substrate inhibition is observed at high concentrations of oxaloacetate. Catalyzes the reversible oxidation of malate to oxaloacetate. Catalyzes the reduction of oxaloacetate more efficiently than the oxidation of malate. In Syntrophobacter fumaroxidans (strain DSM 10017 / MPOB), this protein is Malate dehydrogenase.